Consider the following 475-residue polypeptide: Probable GABA permease (475 aa).

The next 12 membrane-spanning stretches (helical) occupy residues Val27–Ala47, Ile48–Leu68, Leu105–Leu125, Ala127–Val147, Phe163–Val183, Ala211–Ile231, Val250–Pro270, Leu296–Thr316, Pro345–Pro365, Val368–Ala388, Pro413–Met433, and His438–Ala458.

It belongs to the amino acid-polyamine-organocation (APC) superfamily. Amino acid transporter (AAT) (TC 2.A.3.1) family.

Its subcellular location is the membrane. Its function is as follows. Involved in the degradation of beta-alanine. The polypeptide is Probable GABA permease (bauD) (Pseudomonas aeruginosa (strain ATCC 15692 / DSM 22644 / CIP 104116 / JCM 14847 / LMG 12228 / 1C / PRS 101 / PAO1)).